The following is a 40-amino-acid chain: Large ribosomal subunit protein bL36 (40 aa).

The protein belongs to the bacterial ribosomal protein bL36 family.

This is Large ribosomal subunit protein bL36 from Corynebacterium kroppenstedtii (strain DSM 44385 / JCM 11950 / CIP 105744 / CCUG 35717).